Consider the following 354-residue polypeptide: Uroporphyrinogen decarboxylase (354 aa).

Substrate is bound by residues 27-31, Asp77, Tyr154, Thr209, and His327; that span reads RQAGR.

This sequence belongs to the uroporphyrinogen decarboxylase family. In terms of assembly, homodimer.

The protein resides in the cytoplasm. The catalysed reaction is uroporphyrinogen III + 4 H(+) = coproporphyrinogen III + 4 CO2. It functions in the pathway porphyrin-containing compound metabolism; protoporphyrin-IX biosynthesis; coproporphyrinogen-III from 5-aminolevulinate: step 4/4. In terms of biological role, catalyzes the decarboxylation of four acetate groups of uroporphyrinogen-III to yield coproporphyrinogen-III. This Psychromonas ingrahamii (strain DSM 17664 / CCUG 51855 / 37) protein is Uroporphyrinogen decarboxylase.